Here is an 86-residue protein sequence, read N- to C-terminus: Small ribosomal subunit protein uS15 (86 aa).

The interval 1 to 22 (MSVDTQKVIEDNKRSAQDTGSP) is disordered. The span at 7–16 (KVIEDNKRSA) shows a compositional bias: basic and acidic residues.

The protein belongs to the universal ribosomal protein uS15 family. Part of the 30S ribosomal subunit. Forms a bridge to the 50S subunit in the 70S ribosome, contacting the 23S rRNA.

Its function is as follows. One of the primary rRNA binding proteins, it binds directly to 16S rRNA where it helps nucleate assembly of the platform of the 30S subunit by binding and bridging several RNA helices of the 16S rRNA. In terms of biological role, forms an intersubunit bridge (bridge B4) with the 23S rRNA of the 50S subunit in the ribosome. The chain is Small ribosomal subunit protein uS15 from Xanthomonas axonopodis pv. citri (strain 306).